Here is a 68-residue protein sequence, read N- to C-terminus: uncharacterized protein (68 aa).

This is an uncharacterized protein from Homo sapiens (Human).